Consider the following 311-residue polypeptide: Salutaridine reductase (311 aa).

17 to 40 (VTGGNKGIGFEICKQLSSSGIMVV) contributes to the NADP(+) binding site. A substrate-binding site is contributed by Ser-180. The active-site Proton acceptor is the Tyr-236.

This sequence belongs to the short-chain dehydrogenases/reductases (SDR) family.

It catalyses the reaction (7S)-salutaridinol + NADP(+) = salutaridine + NADPH + H(+). Its activity is regulated as follows. Subject to substrate inhibition at salutaridine concentrations higher than 20 to 30 uM. Involved in biosynthesis of morphinan-type benzylisoquinoline alkaloids. Catalyzes the stereospecific conversion of salutaridine to salutaridinol. The chain is Salutaridine reductase from Papaver bracteatum (Great scarlet poppy).